The following is a 485-amino-acid chain: Aspartyl/glutamyl-tRNA(Asn/Gln) amidotransferase subunit B (485 aa).

The protein belongs to the GatB/GatE family. GatB subfamily. In terms of assembly, heterotrimer of A, B and C subunits.

The enzyme catalyses L-glutamyl-tRNA(Gln) + L-glutamine + ATP + H2O = L-glutaminyl-tRNA(Gln) + L-glutamate + ADP + phosphate + H(+). It catalyses the reaction L-aspartyl-tRNA(Asn) + L-glutamine + ATP + H2O = L-asparaginyl-tRNA(Asn) + L-glutamate + ADP + phosphate + 2 H(+). Functionally, allows the formation of correctly charged Asn-tRNA(Asn) or Gln-tRNA(Gln) through the transamidation of misacylated Asp-tRNA(Asn) or Glu-tRNA(Gln) in organisms which lack either or both of asparaginyl-tRNA or glutaminyl-tRNA synthetases. The reaction takes place in the presence of glutamine and ATP through an activated phospho-Asp-tRNA(Asn) or phospho-Glu-tRNA(Gln). This chain is Aspartyl/glutamyl-tRNA(Asn/Gln) amidotransferase subunit B, found in Cupriavidus taiwanensis (strain DSM 17343 / BCRC 17206 / CCUG 44338 / CIP 107171 / LMG 19424 / R1) (Ralstonia taiwanensis (strain LMG 19424)).